We begin with the raw amino-acid sequence, 177 residues long: MDLPAPIHDILLVSLGSGLIVGGLGVVLLTNPIYSAFSLGLVLVCISLFYIPSNSYFVAAAQLLIYVGAINVLILFAVMFMNGSEYYNYFHFWTVGDGFTSLVCTSIFFSLIATIPNTSWYGIIWTTRSNQIIEQDLTSNVQQIGIHLSTDFYLPFELISIILLVSLVGAIAMARRE.

The next 5 membrane-spanning stretches (helical) occupy residues 10–30 (ILLV…VLLT), 32–52 (PIYS…FYIP), 61–81 (AQLL…VMFM), 92–112 (FWTV…FSLI), and 152–172 (FYLP…GAIA).

It belongs to the complex I subunit 6 family. As to quaternary structure, NDH is composed of at least 16 different subunits, 5 of which are encoded in the nucleus.

The protein localises to the plastid. It is found in the chloroplast thylakoid membrane. It catalyses the reaction a plastoquinone + NADH + (n+1) H(+)(in) = a plastoquinol + NAD(+) + n H(+)(out). The enzyme catalyses a plastoquinone + NADPH + (n+1) H(+)(in) = a plastoquinol + NADP(+) + n H(+)(out). NDH shuttles electrons from NAD(P)H:plastoquinone, via FMN and iron-sulfur (Fe-S) centers, to quinones in the photosynthetic chain and possibly in a chloroplast respiratory chain. The immediate electron acceptor for the enzyme in this species is believed to be plastoquinone. Couples the redox reaction to proton translocation, and thus conserves the redox energy in a proton gradient. The protein is NAD(P)H-quinone oxidoreductase subunit 6, chloroplastic (ndhG) of Nymphaea alba (White water-lily).